An 854-amino-acid chain; its full sequence is MSSGANITYASRKRRKPVQKTVKPIPAEGIKSNPSKRHRDRLNTELDRLASLLPFPQDVINKLDKLSVLRLSVSYLRAKSFFDVALKSTPADRNGGQDQCRAQIRDWQDLQEGEFLLQALNGFVLVVTADALVFYASSTIQDYLGFQQSDVIHQSVYELIHTEDRAEFQRQLHWALNPSQCTDSAQGVDEAHGPPQAAVYYTPDQLPPENASFMERCFRCRLRCLLDNSSGFLAMNFQGRLKYLHGQNKKGKDGALLPPQLALFAIATPLQPPSILEIRTKNFIFRTKHKLDFTPIGCDAKGQLILGYTEVELCTRGSGYQFIHAADMLHCAESHIRMIKTGESGMTVFRLLAKHSRWRWVQSNARLIYRNGRPDYIIATQRPLTDEEGREHLQKRSMSLPFMFATGEAVLYEISSPFSPIMDPLPIRTKSNTSRKDWAPQSTPSKDSFHPSSLMSALIQQDESIYLCPPSSPAPLDSHFLMGSVSKCGSWQDSFAATGSEAALKHEQIGHAQDVNLALSGGPSELFPDNKNNDLYSIMRNLGIDFEDIRSMQNEEFFRTDSTAAAAGEVDFKDIDITDEILTYVQDSLNNSTLLNSACQQQPVTQHLSCMLQERLQLEQQQQLQQPPPQALEPQQQLCQMVCPQQDLGPKHTQINGTFASWNPTPPVSFNCPQQELKHYQLFSSLQGTAQEFPYKPEVDSVPYTQNFAPCNQPLLPEHSKSVQLDFPGRDFEPSLHPTTSNLDFVSCLQVPENQSHGINSQSAMVSPQAYYAGAMSMYQCQPGPQRTPVDQTQYSSEIPGSQAFLSKVQSRGVFNETYSSDLSSIGHAAQTTGHLHHLAEAQPLPDITPGGFL.

A propeptide spanning residues 1-9 is cleaved from the precursor; sequence MSSGANITY. Residues 1-38 form a disordered region; the sequence is MSSGANITYASRKRRKPVQKTVKPIPAEGIKSNPSKRH. Short sequence motifs (nuclear localization signal) lie at residues 12–15 and 36–41; these read RKRR and KRHRDR. A bHLH domain is found at 26–79; that stretch reads PAEGIKSNPSKRHRDRLNTELDRLASLLPFPQDVINKLDKLSVLRLSVSYLRAK. A DNA-binding region spans residues 37-65; the sequence is RHRDRLNTELDRLASLLPFPQDVINKLDK. Required for maintaining the overall integrity of the AHR:ARNT heterodimer and its transcriptional activity stretches follow at residues 49–81, 116–124, and 264–266; these read LASL…AKSF, LLQALNGFV, and FAI. The Nuclear export signal motif lies at 63-71; it reads LDKLSVLRL. The region spanning 111–175 is the PAS 1 domain; that stretch reads QEGEFLLQAL…AEFQRQLHWA (65 aa). The PAS 2 domain maps to 270-340; the sequence is LQPPSILEIR…CAESHIRMIK (71 aa). Residues 346-387 form the PAC domain; sequence MTVFRLLAKHSRWRWVQSNARLIYRNGRPDYIIATQRPLTDE. A disordered region spans residues 425–451; it reads LPIRTKSNTSRKDWAPQSTPSKDSFHP. Over residues 440–451 the composition is skewed to polar residues; that stretch reads PQSTPSKDSFHP.

As to quaternary structure, homodimer. Heterodimer; efficient DNA binding requires dimerization with another bHLH protein. Interacts with ARNT; the heterodimer ARNT:AHR binds to core DNA sequence 5'-TGCGTG-3' within the dioxin response element (DRE) of target gene promoters and activates their transcription. Binds MYBBP1A. Interacts with coactivators including SRC-1, RIP140 and NOCA7, and with the corepressor SMRT. Interacts with NEDD8 and IVNS1ABP. Interacts with BMAL1. Interacts with HSP90AB1. Interacts with TIPARP; leading to mono-ADP-ribosylation of AHR and subsequent inhibition of AHR. Post-translationally, mono-ADP-ribosylated, leading to inhibit transcription activator activity of AHR.

The protein localises to the cytoplasm. It is found in the nucleus. Functionally, ligand-activated transcription factor that enables cells to adapt to changing conditions by sensing compounds from the environment, diet, microbiome and cellular metabolism, and which plays important roles in development, immunity and cancer. Upon ligand binding, translocates into the nucleus, where it heterodimerizes with ARNT and induces transcription by binding to xenobiotic response elements (XRE). Regulates a variety of biological processes, including angiogenesis, hematopoiesis, drug and lipid metabolism, cell motility and immune modulation. Xenobiotics can act as ligands: upon xenobiotic-binding, activates the expression of multiple phase I and II xenobiotic chemical metabolizing enzyme genes (such as the CYP1A1 gene). Mediates biochemical and toxic effects of halogenated aromatic hydrocarbons. Next to xenobiotics, natural ligands derived from plants, microbiota, and endogenous metabolism are potent AHR agonists. Tryptophan (Trp) derivatives constitute an important class of endogenous AHR ligands. Acts as a negative regulator of anti-tumor immunity: indoles and kynurenic acid generated by Trp catabolism act as ligand and activate AHR, thereby promoting AHR-driven cancer cell motility and suppressing adaptive immunity. Regulates the circadian clock by inhibiting the basal and circadian expression of the core circadian component PER1. Inhibits PER1 by repressing the CLOCK-BMAL1 heterodimer mediated transcriptional activation of PER1. The heterodimer ARNT:AHR binds to core DNA sequence 5'-TGCGTG-3' within the dioxin response element (DRE) of target gene promoters and activates their transcription. The polypeptide is Aryl hydrocarbon receptor (Ahr) (Mus spicilegus (Steppe mouse)).